The following is a 129-amino-acid chain: UPF0102 protein Mrad2831_2938 (129 aa).

This sequence belongs to the UPF0102 family.

In Methylobacterium radiotolerans (strain ATCC 27329 / DSM 1819 / JCM 2831 / NBRC 15690 / NCIMB 10815 / 0-1), this protein is UPF0102 protein Mrad2831_2938.